We begin with the raw amino-acid sequence, 225 residues long: ATP-dependent dethiobiotin synthetase BioD 1 (225 aa).

13–18 (EVGKTV) contacts ATP. Thr17 is a binding site for Mg(2+). Lys38 is a catalytic residue. Ser42 contacts substrate. ATP is bound by residues Asp55, 116–119 (EGAG), 176–177 (ND), 205–207 (PWL), and Glu212. Mg(2+)-binding residues include Asp55 and Glu116.

The protein belongs to the dethiobiotin synthetase family. In terms of assembly, homodimer. The cofactor is Mg(2+).

It is found in the cytoplasm. It carries out the reaction (7R,8S)-7,8-diammoniononanoate + CO2 + ATP = (4R,5S)-dethiobiotin + ADP + phosphate + 3 H(+). The protein operates within cofactor biosynthesis; biotin biosynthesis; biotin from 7,8-diaminononanoate: step 1/2. Its function is as follows. Catalyzes a mechanistically unusual reaction, the ATP-dependent insertion of CO2 between the N7 and N8 nitrogen atoms of 7,8-diaminopelargonic acid (DAPA, also called 7,8-diammoniononanoate) to form a ureido ring. In Escherichia coli O157:H7, this protein is ATP-dependent dethiobiotin synthetase BioD 1.